The sequence spans 245 residues: Ribonuclease 3 (245 aa).

Residues 19–148 (FKVFQEKIGI…FIGALYLDQG (130 aa)) form the RNase III domain. E61 contributes to the Mg(2+) binding site. D65 is an active-site residue. Residues D134 and E137 each contribute to the Mg(2+) site. E137 is an active-site residue. The 70-residue stretch at 174-243 (DYKSQLQELI…AAEALKKLKE (70 aa)) folds into the DRBM domain.

The protein belongs to the ribonuclease III family. Homodimer. Requires Mg(2+) as cofactor.

It localises to the cytoplasm. The enzyme catalyses Endonucleolytic cleavage to 5'-phosphomonoester.. Its function is as follows. Digests double-stranded RNA. Involved in the processing of primary rRNA transcript to yield the immediate precursors to the large and small rRNAs (23S and 16S). Processes some mRNAs, and tRNAs when they are encoded in the rRNA operon. Processes pre-crRNA and tracrRNA of type II CRISPR loci if present in the organism. The protein is Ribonuclease 3 of Bacillus cereus (strain AH187).